The primary structure comprises 176 residues: MFDTMTVTKAAGALIGSLLFLLLMSWAASGIFHVGTSGHGAEGEEHAQAYTYPVESAGGAEGEAVDEGPDFATVLASADPAAGEKVFGKCKACHKLDGNDGVGPHLNGVVGRTVAGVDGFNYSDPMKAHGGDWTPEALQEFLTNPKAVVKGTKMAFAGLPKIEDRANLIAYLEGQQ.

The helical; Signal-anchor transmembrane segment at 12–32 threads the bilayer; the sequence is GALIGSLLFLLLMSWAASGIF. Heme c-binding residues include cysteine 90, cysteine 93, histidine 94, methionine 126, and methionine 154.

Post-translationally, binds 1 heme c group covalently per subunit.

It localises to the cell membrane. Mediates the electron transport between the cytochrome bc1 complex and cytochrome-c oxidase. This Paracoccus denitrificans protein is Cytochrome c-552 (cycM).